Reading from the N-terminus, the 162-residue chain is Peroxiredoxin-2D (162 aa).

A Thioredoxin domain is found at 4–162; the sequence is ITVGDVVPDG…SSAEDILKAL (159 aa). The active-site Cysteine sulfenic acid (-SOH) intermediate is C51.

It belongs to the peroxiredoxin family. Prx5 subfamily. As to quaternary structure, monomer. As to expression, exclusively expressed in buds and flowers. Also detected in pollen.

The protein resides in the cytoplasm. The catalysed reaction is [glutaredoxin]-dithiol + a hydroperoxide = [glutaredoxin]-disulfide + an alcohol + H2O. Its function is as follows. Thiol-specific peroxidase that catalyzes the reduction of hydrogen peroxide and organic hydroperoxides to water and alcohols, respectively. Plays a role in cell protection against oxidative stress by detoxifying peroxides. May be involved in intracellular redox signaling. This Arabidopsis thaliana (Mouse-ear cress) protein is Peroxiredoxin-2D (PRXIID).